The sequence spans 319 residues: Acetyl-coenzyme A carboxylase carboxyl transferase subunit alpha (319 aa).

Residues 35–296 form the CoA carboxyltransferase C-terminal domain; that stretch reads DLDKELEQLE…KATLLRQLAD (262 aa).

It belongs to the AccA family. In terms of assembly, acetyl-CoA carboxylase is a heterohexamer composed of biotin carboxyl carrier protein (AccB), biotin carboxylase (AccC) and two subunits each of ACCase subunit alpha (AccA) and ACCase subunit beta (AccD).

The protein localises to the cytoplasm. The catalysed reaction is N(6)-carboxybiotinyl-L-lysyl-[protein] + acetyl-CoA = N(6)-biotinyl-L-lysyl-[protein] + malonyl-CoA. Its pathway is lipid metabolism; malonyl-CoA biosynthesis; malonyl-CoA from acetyl-CoA: step 1/1. Component of the acetyl coenzyme A carboxylase (ACC) complex. First, biotin carboxylase catalyzes the carboxylation of biotin on its carrier protein (BCCP) and then the CO(2) group is transferred by the carboxyltransferase to acetyl-CoA to form malonyl-CoA. In Vibrio cholerae serotype O1 (strain ATCC 39541 / Classical Ogawa 395 / O395), this protein is Acetyl-coenzyme A carboxylase carboxyl transferase subunit alpha.